A 418-amino-acid chain; its full sequence is Phosphoglycerate kinase (418 aa).

13 residues coordinate (2R)-3-phosphoglycerate: V24, D25, F26, N27, R40, S63, H64, G66, R67, L122, R123, H169, and R170. G213 is an ADP binding site. Residue G213 coordinates CDP. AMP is bound by residues A214 and K215. ATP is bound at residue A214. A214 contacts Mg(2+). Residues A217 and D218 each coordinate Mg(2+). CDP is bound at residue D218. An AMP-binding site is contributed by K219. Position 219 (K219) interacts with ATP. Position 237 (G237) interacts with ADP. G237 lines the CDP pocket. AMP-binding residues include G238 and G312. Residues G238 and G312 each contribute to the ATP site. CDP-binding residues include G337 and F342. An ADP-binding site is contributed by F342. An AMP-binding site is contributed by E343. Residues E343, D374, and T375 each coordinate ATP. D374 serves as a coordination point for Mg(2+).

Belongs to the phosphoglycerate kinase family. In terms of assembly, monomer. Requires Mg(2+) as cofactor.

It catalyses the reaction (2R)-3-phosphoglycerate + ATP = (2R)-3-phospho-glyceroyl phosphate + ADP. It functions in the pathway carbohydrate degradation; glycolysis; pyruvate from D-glyceraldehyde 3-phosphate: step 2/5. The protein is Phosphoglycerate kinase (PGK) of Euplotes crassus.